Consider the following 46-residue polypeptide: Esculentin-1A (46 aa).

Cys40 and Cys46 are oxidised to a cystine.

It belongs to the frog skin active peptide (FSAP) family. Brevinin subfamily. As to expression, expressed by the skin glands.

Its subcellular location is the secreted. Its function is as follows. Shows antibacterial activity against representative Gram-negative and Gram-positive bacterial species, and hemolytic activity. The chain is Esculentin-1A from Pelophylax lessonae (Pool frog).